A 123-amino-acid chain; its full sequence is Small ribosomal subunit protein uS12 (123 aa).

The residue at position 89 (Asp89) is a 3-methylthioaspartic acid. The tract at residues 102-123 (LDTSGVQDRRQRRSKYGAKRPK) is disordered. The segment covering 111-123 (RQRRSKYGAKRPK) has biased composition (basic residues).

Belongs to the universal ribosomal protein uS12 family. In terms of assembly, part of the 30S ribosomal subunit. Contacts proteins S8 and S17. May interact with IF1 in the 30S initiation complex.

With S4 and S5 plays an important role in translational accuracy. Functionally, interacts with and stabilizes bases of the 16S rRNA that are involved in tRNA selection in the A site and with the mRNA backbone. Located at the interface of the 30S and 50S subunits, it traverses the body of the 30S subunit contacting proteins on the other side and probably holding the rRNA structure together. The combined cluster of proteins S8, S12 and S17 appears to hold together the shoulder and platform of the 30S subunit. This chain is Small ribosomal subunit protein uS12, found in Lawsonia intracellularis (strain PHE/MN1-00).